A 313-amino-acid polypeptide reads, in one-letter code: Ribosomal RNA small subunit methyltransferase H (313 aa).

S-adenosyl-L-methionine is bound by residues 35–37 (GGH), Asp55, Phe79, Asp100, and Gln107.

The protein belongs to the methyltransferase superfamily. RsmH family.

It localises to the cytoplasm. The enzyme catalyses cytidine(1402) in 16S rRNA + S-adenosyl-L-methionine = N(4)-methylcytidine(1402) in 16S rRNA + S-adenosyl-L-homocysteine + H(+). In terms of biological role, specifically methylates the N4 position of cytidine in position 1402 (C1402) of 16S rRNA. The chain is Ribosomal RNA small subunit methyltransferase H from Burkholderia pseudomallei (strain 1106a).